We begin with the raw amino-acid sequence, 266 residues long: Cell division protein FtsQ (266 aa).

Topologically, residues M1 to A31 are cytoplasmic. Residues I32–F52 form a helical membrane-spanning segment. The Periplasmic portion of the chain corresponds to T53–Y266. In terms of domain architecture, POTRA spans F72–R140.

The protein belongs to the FtsQ/DivIB family. FtsQ subfamily.

The protein resides in the cell inner membrane. Functionally, essential cell division protein. This Rickettsia typhi (strain ATCC VR-144 / Wilmington) protein is Cell division protein FtsQ.